A 55-amino-acid polypeptide reads, in one-letter code: Large ribosomal subunit protein bL33 (55 aa).

The protein belongs to the bacterial ribosomal protein bL33 family.

This chain is Large ribosomal subunit protein bL33, found in Rhodopseudomonas palustris (strain BisA53).